The sequence spans 423 residues: Protein FAM43A (423 aa).

Positions 263 to 283 (EQELQEEEEEEQPEGCPEEEE) are enriched in acidic residues. Disordered regions lie at residues 263-298 (EQEL…EAEA), 321-344 (RGEA…LLLG), and 382-423 (LSGD…PHSG). Gly residues predominate over residues 323-335 (EALGGGGGSLGPG). The span at 383–393 (SGDSTGSESSI) shows a compositional bias: low complexity. A compositionally biased stretch (polar residues) spans 401-411 (TSATAGDSSRQ).

Belongs to the FAM43 family.

In Homo sapiens (Human), this protein is Protein FAM43A (FAM43A).